The following is a 653-amino-acid chain: Sodium-dependent phosphate transporter 2 (653 aa).

Residue methionine 1 is a topological domain, extracellular. Residues 2–22 traverse the membrane as a helical segment; it reads VLVEYLWMVIVGFIIAFILAF. At 23-46 the chain is on the cytoplasmic side; sequence SVGANDVANSFGTAVGSGVVTLRQ. Residues 47–67 form a helical membrane-spanning segment; sequence ACILASIFETTGSVLLGAKVG. Topologically, residues 68–86 are extracellular; the sequence is ETIRKGIIDVNLYNNTVDL. Asparagine 81 is a glycosylation site (N-linked (GlcNAc...) asparagine). Residues 87 to 107 traverse the membrane as a helical segment; it reads LMAGEVSAMVGSAVWQLIASF. Residues 108-109 lie on the Cytoplasmic side of the membrane; sequence LR. A helical membrane pass occupies residues 110-130; that stretch reads LPISGTHCIVGATIGFSLVAI. Residues 131–142 lie on the Extracellular side of the membrane; that stretch reads GTHGVQWMQLVK. Residues 143–163 form a helical membrane-spanning segment; that stretch reads IVASWFISPLLSGLMSGALFL. Residues 164-187 lie on the Cytoplasmic side of the membrane; the sequence is MIKFFILKKEDPVPNGLKALPVFY. A helical membrane pass occupies residues 188–208; that stretch reads AATIGINVFSILYTGAPLLGL. The Extracellular segment spans residues 209–217; the sequence is ESFPVWATA. A helical transmembrane segment spans residues 218–238; it reads LLSIGIAIIFALIVWFFVCPW. Over 239–483 the chain is Cytoplasmic; the sequence is MKKKIASRLK…EDKEEKDKSE (245 aa). The chain crosses the membrane as a helical span at residues 484–504; the sequence is VHLLFHFLQILTACFGSFAHG. Residues 505 to 532 are Extracellular-facing; it reads GNDVSNAIGPLVALWLIYEQGGVMQEAS. A helical transmembrane segment spans residues 533 to 553; the sequence is TPVWLLLYGGVGICAGLWVWG. At 554–572 the chain is on the cytoplasmic side; the sequence is RRVIQTMGKDLTPITPSSG. A helical membrane pass occupies residues 573-587; sequence FTIELASAFTVVVAS. The Extracellular segment spans residues 588–594; that stretch reads NIGLPIS. The helical transmembrane segment at 595–610 threads the bilayer; it reads TTHCKVGSVVAVGWIR. Residues 611–622 lie on the Cytoplasmic side of the membrane; that stretch reads SRKAVDWRLFRN. Residues 623–643 form a helical membrane-spanning segment; it reads IFLAWFVTVPVAGLFSAGVMA. The Extracellular segment spans residues 644–653; that stretch reads ILQYGILPYV.

It belongs to the inorganic phosphate transporter (PiT) (TC 2.A.20) family. In terms of assembly, homodimer.

It localises to the cell membrane. The protein resides in the apical cell membrane. It carries out the reaction 2 Na(+)(out) + phosphate(out) = 2 Na(+)(in) + phosphate(in). Sodium-phosphate symporter which preferentially transports the monovalent form of phosphate with a stoichiometry of two sodium ions per phosphate ion. This is Sodium-dependent phosphate transporter 2 (slc20a2) from Xenopus tropicalis (Western clawed frog).